Reading from the N-terminus, the 444-residue chain is Maintenance of mitochondrial morphology protein 1 (444 aa).

A compositionally biased stretch (polar residues) spans 1–16 (MKGVENTLSQSESVNR). The segment at 1–20 (MKGVENTLSQSESVNRGYNG) is disordered. At 1–107 (MKGVENTLSQ…TFSSRSFAEG (107 aa)) the chain is on the lumenal side. Residues 108 to 128 (LVVGQLSVIVVLIFFIKFFIF) form a helical membrane-spanning segment. The Cytoplasmic portion of the chain corresponds to 129–444 (SDGPAKTGGG…QEEDPSRAPE (316 aa)). The interval 136-157 (GGGGGSSAESRSSGFTGSPLTS) is disordered. A compositionally biased stretch (low complexity) spans 142 to 157 (SAESRSSGFTGSPLTS). In terms of domain architecture, SMP-LTD spans 204-418 (SPESLDWFNV…EPRFQFVKLP (215 aa)). Residues 425–444 (KNTREEKSDMQEEDPSRAPE) are disordered. Over residues 426–444 (NTREEKSDMQEEDPSRAPE) the composition is skewed to basic and acidic residues.

This sequence belongs to the MMM1 family. In terms of assembly, homodimer. Component of the ER-mitochondria encounter structure (ERMES) or MDM complex, composed of MMM1, MDM10, MDM12 and MDM34. An MMM1 homodimer associates with one molecule of MDM12 on each side in a pairwise head-to-tail manner, and the SMP-LTD domains of MMM1 and MDM12 generate a continuous hydrophobic tunnel for phospholipid trafficking.

It is found in the endoplasmic reticulum membrane. Component of the ERMES/MDM complex, which serves as a molecular tether to connect the endoplasmic reticulum (ER) and mitochondria. Components of this complex are involved in the control of mitochondrial shape and protein biogenesis, and function in nonvesicular lipid trafficking between the ER and mitochondria. The MDM12-MMM1 subcomplex functions in the major beta-barrel assembly pathway that is responsible for biogenesis of all outer membrane beta-barrel proteins, and acts in a late step after the SAM complex. The MDM10-MDM12-MMM1 subcomplex further acts in the TOM40-specific pathway after the action of the MDM12-MMM1 complex. Essential for establishing and maintaining the structure of mitochondria and maintenance of mtDNA nucleoids. The chain is Maintenance of mitochondrial morphology protein 1 from Eremothecium gossypii (strain ATCC 10895 / CBS 109.51 / FGSC 9923 / NRRL Y-1056) (Yeast).